We begin with the raw amino-acid sequence, 450 residues long: MEEKLAVSLQEALQEGDTRALREVLEEIHPQDLLALWDELKGEHRYVVLTLLPKAKAAEVLSHLSPEEQAEYLKTLPPWRLREILEELSLDDLADALQAVRKEDPAYFQRLKDLLDPRTRAEVEALARYEEDEAGGLMTPEYVAVREGMTVEEVLRFLRRAAPDAETIYYIYVVDEKGRLKGVLSLRDLIVADPRTRVAEIMNPKVVYVRTDTDQEEVARLMADYDFTVLPVVDEEGRLVGIVTVDDVLDVLEAEATEDIHKLGAVDVPDLVYSEAGPVALWLARVRWLVILILTGMVTSSILQGFESVLEAVTALAFYVPVLLGTGGNTGNQSATLIIRALATRDLDLRDWRRVFLKEMGVGLLLGLTLSFLLVGKVYWDGHPLLLPVVGVSLVLIVFFANLVGAMLPFLLRRLGVDPALVSNPLVATLSDVTGLLIYLSVARLLLEAV.

Residues 1–283 (MEEKLAVSLQ…SEAGPVALWL (283 aa)) lie on the Cytoplasmic side of the membrane. Residues E59, D91, D95, and G136 each contribute to the Mg(2+) site. CBS domains follow at residues 138 to 200 (MTPE…RVAE) and 202 to 258 (MNPK…EATE). Residues Y170, S185, R187, D188, and V207 each coordinate ATP. Residues E216, A223, D226, D247, D250, E255, E258, and D259 each contribute to the Mg(2+) site. Position 275 (E275) interacts with Ca(2+). Residues E275, Q304, E307, and E311 each coordinate Mn(2+). Residues 284 to 306 (ARVRWLVILILTGMVTSSILQGF) traverse the membrane as a helical segment. Residues 307 to 315 (ESVLEAVTA) are Periplasmic-facing. Residue E311 participates in Ca(2+) binding. A helical transmembrane segment spans residues 316–337 (LAFYVPVLLGTGGNTGNQSATL). At 338-351 (IIRALATRDLDLRD) the chain is on the cytoplasmic side. The helical transmembrane segment at 352 to 381 (WRRVFLKEMGVGLLLGLTLSFLLVGKVYWD) threads the bilayer. Residues 382 to 385 (GHPL) lie on the Periplasmic side of the membrane. H383 is a Mn(2+) binding site. Residues 386 to 409 (LLPVVGVSLVLIVFFANLVGAMLP) form a helical membrane-spanning segment. Over 410–420 (FLLRRLGVDPA) the chain is Cytoplasmic. Residues D418, A428, and D432 each coordinate Mg(2+). Residues 421 to 443 (LVSNPLVATLSDVTGLLIYLSVA) form a helical membrane-spanning segment. The Periplasmic portion of the chain corresponds to 444–450 (RLLLEAV).

The protein belongs to the SLC41A transporter family. In terms of assembly, homodimer.

It is found in the cell inner membrane. The catalysed reaction is Mg(2+)(in) = Mg(2+)(out). The channel activity is regulated via the N-terminal cytoplasmic region, which acts as a Mg(2+) sensor to regulate the gating of the ion-conducting pore in response to the intracellular magnesium concentration. Under high-intracellular magnesium conditions, binding of magnesium to the N-terminal cytoplasmic domain stabilizes the closed conformation of the channel. Under low-intracellular magnesium conditions, the channel is in equilibrium between the open and closed states. A cation-binding site within the membrane (M1) strictly recognizes the size and geometry of the Mg(2+) hydration shells, which may be important for the selective transport of Mg(2+) over other cations. Cation-binding sites on the periplasmic side (M2 and M3) regulate channel opening and prevent conduction of near-cognate cations. Binding of Mn(2+) to the periplasmic sites strongly inhibits the Mg(2+) transport activity. In addition, activity is regulated by ATP, which binds to MgtE and modulates its Mg(2+)-dependent channel gating. ATP binding enhances the intracellular domain affinity for Mg(2+) within physiological concentrations of this divalent cation, enabling MgtE to function as an in vivo Mg(2+) sensor. ATP dissociation from MgtE upregulates Mg(2+) influx at both high and low intracellular Mg(2+) concentrations. In terms of biological role, highly selective magnesium channel that plays an important role in Mg(2+) homeostasis. Functions as a Mg(2+)-dependent gating channel. Exhibits low activity with cobalt, suggesting that it might also be involved in the uptake of Co(2+) as a micronutrient. Also exhibits low activity with Ca(2+), but it shows almost no activity with Mn(2+). This chain is Magnesium transporter MgtE, found in Thermus thermophilus (strain ATCC 27634 / DSM 579 / HB8).